Consider the following 595-residue polypeptide: SVP1-like protein 2 (595 aa).

Positions 1-28 (MVLAHSINTNPNTNTNTNNTSTTSSTTT) are disordered. A WD 1 repeat occupies 30–68 (PNDSKILCINFNQDQGCFAISHEQGFLVYNTDPIELRVK). Composition is skewed to low complexity over residues 76–112 (HTTS…GSNN) and 270–339 (LSPT…TTTT). Disordered regions lie at residues 76 to 132 (HTTS…GSGS) and 264 to 342 (FSKR…TSAK). WD repeat units lie at residues 389–429 (AHKS…LLYE) and 434–473 (IDRA…YPND). A disordered region spans residues 467–490 (ETQYPNDGGSGGTKDGGGGGRGSK). Residues 474–488 (GGSGGTKDGGGGGRG) are compositionally biased toward gly residues.

This sequence belongs to the WD repeat PROPPIN family.

The protein resides in the vacuole membrane. It localises to the cytoplasmic vesicle membrane. In terms of biological role, involved in mitochondrial or peroxisomal functions and amino acid signaling pathways. This chain is SVP1-like protein 2 (HSV2), found in Candida albicans (strain SC5314 / ATCC MYA-2876) (Yeast).